The primary structure comprises 331 residues: uncharacterized protein (331 aa).

It belongs to the ornithine cyclodeaminase/mu-crystallin family.

This is an uncharacterized protein from Sinorhizobium fredii (strain NBRC 101917 / NGR234).